We begin with the raw amino-acid sequence, 371 residues long: Flagellar P-ring protein (371 aa).

The signal sequence occupies residues 1–25 (MTMRVCKWLLTFALLFAATLTPAHS).

It belongs to the FlgI family. In terms of assembly, the basal body constitutes a major portion of the flagellar organelle and consists of four rings (L,P,S, and M) mounted on a central rod.

The protein localises to the periplasm. Its subcellular location is the bacterial flagellum basal body. In terms of biological role, assembles around the rod to form the L-ring and probably protects the motor/basal body from shearing forces during rotation. The polypeptide is Flagellar P-ring protein (Sinorhizobium fredii (strain NBRC 101917 / NGR234)).